Here is a 581-residue protein sequence, read N- to C-terminus: NADH-quinone oxidoreductase subunit C/D (581 aa).

Residues 1-172 (MSGTDLVSEL…PLFNMTAALF (172 aa)) are NADH dehydrogenase I subunit C. Positions 196 to 581 (ELMILNYGPH…IDYVMSDVDR (386 aa)) are NADH dehydrogenase I subunit D.

This sequence in the N-terminal section; belongs to the complex I 30 kDa subunit family. The protein in the C-terminal section; belongs to the complex I 49 kDa subunit family. In terms of assembly, NDH-1 is composed of 13 different subunits. Subunits NuoB, CD, E, F, and G constitute the peripheral sector of the complex.

The protein localises to the cell inner membrane. It catalyses the reaction a quinone + NADH + 5 H(+)(in) = a quinol + NAD(+) + 4 H(+)(out). Its function is as follows. NDH-1 shuttles electrons from NADH, via FMN and iron-sulfur (Fe-S) centers, to quinones in the respiratory chain. The immediate electron acceptor for the enzyme in this species is believed to be ubiquinone. Couples the redox reaction to proton translocation (for every two electrons transferred, four hydrogen ions are translocated across the cytoplasmic membrane), and thus conserves the redox energy in a proton gradient. In Rhodopseudomonas palustris (strain BisB5), this protein is NADH-quinone oxidoreductase subunit C/D.